A 785-amino-acid polypeptide reads, in one-letter code: Protein translocase subunit SecA 3 (785 aa).

ATP-binding positions include Gln-98, 116–120 (GEGKT), and Asp-505.

It belongs to the SecA family. Monomer and homodimer. Part of the essential Sec protein translocation apparatus which comprises SecA, SecYEG and auxiliary proteins SecDF. Other proteins may also be involved.

Its subcellular location is the cell membrane. It is found in the cytoplasm. It carries out the reaction ATP + H2O + cellular proteinSide 1 = ADP + phosphate + cellular proteinSide 2.. Its function is as follows. Part of the Sec protein translocase complex. Interacts with the SecYEG preprotein conducting channel. Has a central role in coupling the hydrolysis of ATP to the transfer of proteins into and across the cell membrane, serving as an ATP-driven molecular motor driving the stepwise translocation of polypeptide chains across the membrane. This chain is Protein translocase subunit SecA 3, found in Mycolicibacterium vanbaalenii (strain DSM 7251 / JCM 13017 / BCRC 16820 / KCTC 9966 / NRRL B-24157 / PYR-1) (Mycobacterium vanbaalenii).